The chain runs to 197 residues: Peptide deformylase (197 aa).

The Fe cation site is built by cysteine 106 and histidine 148. Glutamate 149 is an active-site residue. Histidine 152 contacts Fe cation.

Belongs to the polypeptide deformylase family. The cofactor is Fe(2+).

It catalyses the reaction N-terminal N-formyl-L-methionyl-[peptide] + H2O = N-terminal L-methionyl-[peptide] + formate. Functionally, removes the formyl group from the N-terminal Met of newly synthesized proteins. Requires at least a dipeptide for an efficient rate of reaction. N-terminal L-methionine is a prerequisite for activity but the enzyme has broad specificity at other positions. The protein is Peptide deformylase of Mycolicibacterium paratuberculosis (strain ATCC BAA-968 / K-10) (Mycobacterium paratuberculosis).